The sequence spans 243 residues: E3 ubiquitin-protein ligase RMA3 (243 aa).

The segment at 44–92 (CNICLDTAHDPVVTLCGHLFCWPCIYKWLHVQLSSVSVDQHQNNCPVCK) adopts an RING-type zinc-finger fold. Residues 110-135 (SPSSTFGSKKQDALSTDIPRRPAPSA) form a disordered region. A helical; Anchor for type IV membrane protein transmembrane segment spans residues 223–243 (KSLNRVSIFFLCCIILCLLLF).

As to expression, ubiquitous. Highly expressed in roots.

The protein resides in the endoplasmic reticulum membrane. The catalysed reaction is S-ubiquitinyl-[E2 ubiquitin-conjugating enzyme]-L-cysteine + [acceptor protein]-L-lysine = [E2 ubiquitin-conjugating enzyme]-L-cysteine + N(6)-ubiquitinyl-[acceptor protein]-L-lysine.. It participates in protein modification; protein ubiquitination. Its function is as follows. E3 ubiquitin-protein ligase. The chain is E3 ubiquitin-protein ligase RMA3 (RMA3) from Arabidopsis thaliana (Mouse-ear cress).